Reading from the N-terminus, the 215-residue chain is Leucyl/phenylalanyl-tRNA--protein transferase (215 aa).

This sequence belongs to the L/F-transferase family.

It localises to the cytoplasm. It carries out the reaction N-terminal L-lysyl-[protein] + L-leucyl-tRNA(Leu) = N-terminal L-leucyl-L-lysyl-[protein] + tRNA(Leu) + H(+). It catalyses the reaction N-terminal L-arginyl-[protein] + L-leucyl-tRNA(Leu) = N-terminal L-leucyl-L-arginyl-[protein] + tRNA(Leu) + H(+). The enzyme catalyses L-phenylalanyl-tRNA(Phe) + an N-terminal L-alpha-aminoacyl-[protein] = an N-terminal L-phenylalanyl-L-alpha-aminoacyl-[protein] + tRNA(Phe). Functionally, functions in the N-end rule pathway of protein degradation where it conjugates Leu, Phe and, less efficiently, Met from aminoacyl-tRNAs to the N-termini of proteins containing an N-terminal arginine or lysine. This chain is Leucyl/phenylalanyl-tRNA--protein transferase, found in Campylobacter jejuni subsp. jejuni serotype O:2 (strain ATCC 700819 / NCTC 11168).